The primary structure comprises 305 residues: Transmembrane epididymal protein 1A (305 aa).

A helical transmembrane segment spans residues 4-24; sequence FIGHISPGLFLVFYGLYQAVI. N-linked (GlcNAc...) asparagine glycosylation occurs at Asn32. 5 helical membrane passes run 54 to 74, 124 to 144, 159 to 179, 187 to 207, and 223 to 243; these read IAHAGWLKVVIGSLLIVYEIS, CVLLERGATVLGVYVLLLLLV, SLLILVVFLLMLVLTAELWAP, IETFLILIMGSWLIQAAFILF, and IMFVTTFFCWHVMINALCMLG. The tract at residues 285-305 is disordered; it reads EQQDKDDQAPLLSKISPCDRA.

This sequence belongs to the TMEM45 family.

Its subcellular location is the membrane. The sequence is that of Transmembrane epididymal protein 1A from Mus musculus (Mouse).